Reading from the N-terminus, the 284-residue chain is MAIIMDGKALAVNMQEQLQEKVARLKEKEWIVPGLVVIMVGENPASQVYVRNKERAAKKAGFHSKTVNLSESISEEELIEVIEKYNQDPLFHGILVQLPLPNHINEMRILLAVDPKKDVDGFHPMNTGNLWNGRPQMVPCTPAGIMEILREYNVELEGKTAVIIGRSNIVGKPMAQLLLEKNATVTLTHSRTPHLAKVCNKADVLIVAIGRAKFVTEEFVKEGAVVIDVGINRDEEGKLCGDVDFDQVKEKVSMITPVPGGVGPMTITMLMEQTYQAALRSLKG.

NADP(+) contacts are provided by residues 165–167, serine 190, and isoleucine 231; that span reads GRS.

Belongs to the tetrahydrofolate dehydrogenase/cyclohydrolase family. Homodimer.

The catalysed reaction is (6R)-5,10-methylene-5,6,7,8-tetrahydrofolate + NADP(+) = (6R)-5,10-methenyltetrahydrofolate + NADPH. It carries out the reaction (6R)-5,10-methenyltetrahydrofolate + H2O = (6R)-10-formyltetrahydrofolate + H(+). Its pathway is one-carbon metabolism; tetrahydrofolate interconversion. Catalyzes the oxidation of 5,10-methylenetetrahydrofolate to 5,10-methenyltetrahydrofolate and then the hydrolysis of 5,10-methenyltetrahydrofolate to 10-formyltetrahydrofolate. The chain is Bifunctional protein FolD from Streptococcus thermophilus (strain ATCC BAA-491 / LMD-9).